The sequence spans 507 residues: Type II methyltransferase M.PstI (507 aa).

This sequence belongs to the N(4)/N(6)-methyltransferase family. In terms of assembly, monomer.

It catalyses the reaction a 2'-deoxyadenosine in DNA + S-adenosyl-L-methionine = an N(6)-methyl-2'-deoxyadenosine in DNA + S-adenosyl-L-homocysteine + H(+). Functionally, a gamma subtype methylase that recognizes the double-stranded sequence 5'-CTGCAG-3', methylates A-5 on both strands, and protects the DNA from cleavage by the PstI endonuclease. In Providencia stuartii, this protein is Type II methyltransferase M.PstI (pstIM).